The primary structure comprises 365 residues: Protein Wnt-6 (365 aa).

A signal peptide spans 1–24 (MLPPLPSRLGLLLLLLLCPAHVGG). 11 cysteine pairs are disulfide-bonded: C76–C87, C124–C132, C134–C172, C222–C236, C224–C231, C294–C325, C310–C320, C324–C364, C340–C355, C342–C352, and C347–C348. N-linked (GlcNAc...) asparagine glycosylation is present at N86. The span at 140–158 (RAPPRPSGLPGTPGPPGPA) shows a compositional bias: pro residues. The disordered stretch occupies residues 140–164 (RAPPRPSGLPGTPGPPGPAGSPEGS). S228 carries the O-palmitoleoyl serine; by PORCN lipid modification. N311 is a glycosylation site (N-linked (GlcNAc...) asparagine).

This sequence belongs to the Wnt family. Interacts with PORCN. Palmitoleoylation is required for efficient binding to frizzled receptors. Depalmitoleoylation leads to Wnt signaling pathway inhibition. In terms of tissue distribution, expressed in gastric cancer cell lines and gastric cancer tissues (at protein level). Detected in the apical gland region of the gastric foveolar epithelium (at protein level).

Its subcellular location is the secreted. It localises to the extracellular space. The protein resides in the extracellular matrix. Its function is as follows. Ligand for members of the frizzled family of seven transmembrane receptors. Probable developmental protein. May be a signaling molecule which affects the development of discrete regions of tissues. Is likely to signal over only few cell diameters. Together with CAV1 may promote chemoresistance of gastric cancer cells to DNA-damaging anthracycline drugs through the activation of the canonical Wnt receptor signaling pathway. This chain is Protein Wnt-6 (WNT6), found in Homo sapiens (Human).